A 260-amino-acid polypeptide reads, in one-letter code: 2-oxo-tetronate isomerase (260 aa).

Glu-143 serves as the catalytic Proton donor/acceptor. Mg(2+) is bound by residues Glu-143, Asp-178, Gln-204, and Glu-240. The active-site Proton donor/acceptor is Glu-240.

The protein belongs to the hyi family. OtnI subfamily.

It carries out the reaction 2-dehydro-L-erythronate = 3-dehydro-L-erythronate. The catalysed reaction is 2-dehydro-D-erythronate = 3-dehydro-D-erythronate. Functionally, catalyzes the isomerization of 2-oxo-tetronate to 3-oxo-tetronate. The polypeptide is 2-oxo-tetronate isomerase (Cupriavidus necator (strain ATCC 17699 / DSM 428 / KCTC 22496 / NCIMB 10442 / H16 / Stanier 337) (Ralstonia eutropha)).